Consider the following 375-residue polypeptide: OVARIAN TUMOR DOMAIN-containing deubiquitinating enzyme 7 (375 aa).

The span at 1 to 18 (MAKTKQQKSKPKKQPHQK) shows a compositional bias: basic residues. Residues 1 to 23 (MAKTKQQKSKPKKQPHQKQGKDC) form a disordered region. Residues 37-161 (LKIIQVTADG…GEHYNSVRSK (125 aa)) form the OTU domain. Residue D45 is part of the active site. Residue C48 is the Nucleophile of the active site. H154 is an active-site residue. The UBA-like domain maps to 202–250 (HVNAGAIKVVMSGSCCDNTEKAEQVLLQVNGDVDAAIEFLIADQGMESL). Composition is skewed to polar residues over residues 251 to 264 (TEND…SDTI) and 290 to 305 (ASGN…CTTQ). Residues 251-306 (TENDTETASASDTINPKHASDSPMENTEQAREELIEEESASGNNSETVQAKCTTQT) are disordered. Residues 308–315 (DKKIPRNK) carry the Nuclear localization signal motif.

Belongs to the peptidase C85 family.

It is found in the nucleus. The enzyme catalyses Thiol-dependent hydrolysis of ester, thioester, amide, peptide and isopeptide bonds formed by the C-terminal Gly of ubiquitin (a 76-residue protein attached to proteins as an intracellular targeting signal).. In terms of biological role, hydrolase that can remove conjugated ubiquitin from proteins in vitro and may therefore play an important regulatory role at the level of protein turnover by preventing degradation. Cysteine protease with a preference for 'Lys-63' over 'Lys-48' over 'Met-1' -linked ubiquitin (UB) tetramers as substrates. Also cleaves RUB-GST fusion. This Arabidopsis thaliana (Mouse-ear cress) protein is OVARIAN TUMOR DOMAIN-containing deubiquitinating enzyme 7.